The primary structure comprises 376 residues: MLSMAVTPSNTLTSQYPTKQENYNQNYCSIKSPSPTSTPTSTSLTMTSPPQLHNPHASITLPSIHSLDIPAFPHYEQEYSRASVFQNYSSNSPTPSNSSYSPTLLIPSNDRPASSSVYSNSSSTLLLSPGMSTTPNVNCIAPVSRPRSTSNLTENSEQSFTSQQSHPAISSNATITSPQLSVKSENEQLHEPQNSNTIISPRQNKKNWKPRKKKQCPECNLYFSNLATHKSTHLKPNNRPHICKYCERGFARPNDLFRHVKCHWKEIGSDQGQFKCPFKNIDSSKRENQEKVTGNTGVPDHCCHNTGIFSRCDTFKNHLKAIHFQYPNGTKKEQRNLVNGKCRMCQQEFRNVDDWMHNHIETNSCPYAINLIKKEH.

Disordered regions lie at residues 25 to 58 (QNYC…PHAS), 89 to 122 (SSNS…SNSS), and 137 to 210 (VNCI…NWKP). 2 stretches are compositionally biased toward low complexity: residues 32–50 (SPSP…TSPP) and 89–103 (SSNS…YSPT). 2 stretches are compositionally biased toward polar residues: residues 146–183 (PRST…LSVK) and 191–200 (EPQNSNTIIS). The segment at 241 to 263 (HICKYCERGFARPNDLFRHVKCH) adopts a C2H2-type zinc-finger fold.

Its subcellular location is the nucleus. In terms of biological role, probable transcription factor involved in response to cell wall damage. The polypeptide is Transcriptional regulator STP4 (STP4) (Candida albicans (strain SC5314 / ATCC MYA-2876) (Yeast)).